Consider the following 216-residue polypeptide: Probable GTP-binding protein EngB (216 aa).

Residues 37 to 214 (DGLEVAFAGR…RAAMIRLLDE (178 aa)) enclose the EngB-type G domain. GTP-binding positions include 45–52 (GRSNVGKS), 72–76 (GRTQE), 92–95 (DMPG), 159–162 (TKAD), and 193–195 (TSS). Residues Ser-52 and Thr-74 each contribute to the Mg(2+) site.

This sequence belongs to the TRAFAC class TrmE-Era-EngA-EngB-Septin-like GTPase superfamily. EngB GTPase family. Mg(2+) is required as a cofactor.

Necessary for normal cell division and for the maintenance of normal septation. The chain is Probable GTP-binding protein EngB from Rhodopseudomonas palustris (strain HaA2).